The primary structure comprises 111 residues: Small ribosomal subunit protein bS6 (111 aa).

It belongs to the bacterial ribosomal protein bS6 family.

In terms of biological role, binds together with bS18 to 16S ribosomal RNA. The sequence is that of Small ribosomal subunit protein bS6 from Francisella tularensis subsp. tularensis (strain FSC 198).